The sequence spans 56 residues: Small ribosomal subunit protein uS14A (56 aa).

Zn(2+) is bound by residues Cys21 and Cys24. Ser25 carries the phosphoserine modification. Positions 39 and 42 each coordinate Zn(2+).

Belongs to the universal ribosomal protein uS14 family. In terms of assembly, component of the small ribosomal subunit (SSU). Mature yeast ribosomes consist of a small (40S) and a large (60S) subunit. The 40S small subunit contains 1 molecule of ribosomal RNA (18S rRNA) and 33 different proteins (encoded by 57 genes). The large 60S subunit contains 3 rRNA molecules (25S, 5.8S and 5S rRNA) and 46 different proteins (encoded by 81 genes). Requires Zn(2+) as cofactor.

It localises to the cytoplasm. Its function is as follows. Component of the ribosome, a large ribonucleoprotein complex responsible for the synthesis of proteins in the cell. The small ribosomal subunit (SSU) binds messenger RNAs (mRNAs) and translates the encoded message by selecting cognate aminoacyl-transfer RNA (tRNA) molecules. The large subunit (LSU) contains the ribosomal catalytic site termed the peptidyl transferase center (PTC), which catalyzes the formation of peptide bonds, thereby polymerizing the amino acids delivered by tRNAs into a polypeptide chain. The nascent polypeptides leave the ribosome through a tunnel in the LSU and interact with protein factors that function in enzymatic processing, targeting, and the membrane insertion of nascent chains at the exit of the ribosomal tunnel. This is Small ribosomal subunit protein uS14A from Saccharomyces cerevisiae (strain ATCC 204508 / S288c) (Baker's yeast).